A 182-amino-acid polypeptide reads, in one-letter code: Bis(5'-nucleosyl)-tetraphosphatase [asymmetrical] (182 aa).

The HIT domain occupies 3 to 110; sequence KQLYFSKFPV…IPRKKADFSE (108 aa). Substrate contacts are provided by residues Asn28, Gln84, and 90-93; that span reads GQTV. Residues 95–99 carry the Histidine triad motif motif; the sequence is HVHVH. His97 (tele-AMP-histidine intermediate) is an active-site residue. His99 is a substrate binding site. The tract at residues 135 to 161 is disordered; sequence RYAGDERPPTSMRQAIPKDEDRKPRTL. A compositionally biased stretch (basic and acidic residues) spans 150 to 161; the sequence is IPKDEDRKPRTL.

The enzyme catalyses P(1),P(4)-bis(5'-guanosyl) tetraphosphate + H2O = GMP + GTP + 2 H(+). Asymmetrically hydrolyzes Ap4A to yield AMP and ATP. In Schizosaccharomyces pombe (strain 972 / ATCC 24843) (Fission yeast), this protein is Bis(5'-nucleosyl)-tetraphosphatase [asymmetrical] (aph1).